Reading from the N-terminus, the 206-residue chain is NADH-quinone oxidoreductase subunit C (206 aa).

Belongs to the complex I 30 kDa subunit family. NDH-1 is composed of 14 different subunits. Subunits NuoB, C, D, E, F, and G constitute the peripheral sector of the complex.

The protein resides in the cell inner membrane. The catalysed reaction is a quinone + NADH + 5 H(+)(in) = a quinol + NAD(+) + 4 H(+)(out). Functionally, NDH-1 shuttles electrons from NADH, via FMN and iron-sulfur (Fe-S) centers, to quinones in the respiratory chain. The immediate electron acceptor for the enzyme in this species is believed to be ubiquinone. Couples the redox reaction to proton translocation (for every two electrons transferred, four hydrogen ions are translocated across the cytoplasmic membrane), and thus conserves the redox energy in a proton gradient. This Bordetella avium (strain 197N) protein is NADH-quinone oxidoreductase subunit C.